A 497-amino-acid polypeptide reads, in one-letter code: Glutamyl-tRNA(Gln) amidotransferase subunit A (497 aa).

Residues Lys91 and Ser166 each act as charge relay system in the active site. The disordered stretch occupies residues 143–171 (SSTENSAYGPTHNPWDLERTAGGSGGGSS). The active-site Acyl-ester intermediate is Ser190.

The protein belongs to the amidase family. GatA subfamily. Heterotrimer of A, B and C subunits.

The catalysed reaction is L-glutamyl-tRNA(Gln) + L-glutamine + ATP + H2O = L-glutaminyl-tRNA(Gln) + L-glutamate + ADP + phosphate + H(+). Allows the formation of correctly charged Gln-tRNA(Gln) through the transamidation of misacylated Glu-tRNA(Gln) in organisms which lack glutaminyl-tRNA synthetase. The reaction takes place in the presence of glutamine and ATP through an activated gamma-phospho-Glu-tRNA(Gln). The sequence is that of Glutamyl-tRNA(Gln) amidotransferase subunit A from Corynebacterium glutamicum (strain R).